Consider the following 698-residue polypeptide: Inner centromere protein SLI15 (698 aa).

Residue Ser268 is modified to Phosphoserine. Disordered stretches follow at residues 365 to 390 (KNKITKNNSPKGKNSRKSSIPRFDKT), 405 to 444 (EQKKKSKHSSDVHKTGSRPHSISPTKISVDSSSPSKEVKN), and 455 to 474 (RPTKASISPNKNKNLTTSQT). 2 stretches are compositionally biased toward polar residues: residues 422–439 (RPHSISPTKISVDSSSPS) and 459–474 (ASISPNKNKNLTTSQT). A Phosphoserine modification is found at Ser489. Positions 535-560 (IMRSQQEHHRRKQEKQKRMSHLEQDL) are disordered. Residues 550–560 (QKRMSHLEQDL) show a composition bias toward basic and acidic residues.

It belongs to the INCENP family. In terms of assembly, component of the CPC complex at least composed of IPL1, BIR1 and SLI15. In terms of processing, phosphorylated by serine/threonine protein kinase IPL1.

It localises to the nucleus. The protein resides in the cytoplasm. It is found in the cytoskeleton. Its subcellular location is the spindle. The protein localises to the chromosome. It localises to the centromere. The protein resides in the kinetochore. Its function is as follows. Component of the chromosomal passenger complex (CPC), a complex that acts as a key regulator of mitosis. Stimulates IPL1 kinase activity and facilitates its association with the mitotic spindle. Has a role in attaching the kinetochores to the microtubules and ensuring that sister kinetochores connect to opposite poles. This is Inner centromere protein SLI15 (SLI15) from Saccharomyces cerevisiae (strain ATCC 204508 / S288c) (Baker's yeast).